A 1124-amino-acid chain; its full sequence is DNA-directed RNA polymerase subunit Rpo2 (1124 aa).

Zn(2+)-binding residues include cysteine 1061, cysteine 1064, cysteine 1079, and histidine 1082.

This sequence belongs to the RNA polymerase beta chain family. As to quaternary structure, part of the 13-subunit RNA polymerase complex. Requires Zn(2+) as cofactor.

The protein resides in the cytoplasm. The enzyme catalyses RNA(n) + a ribonucleoside 5'-triphosphate = RNA(n+1) + diphosphate. Its function is as follows. DNA-dependent RNA polymerase (RNAP) catalyzes the transcription of DNA into RNA using the four ribonucleoside triphosphates as substrates. This subunit is involved in DNA promoter recognition. In Saccharolobus solfataricus (strain ATCC 35092 / DSM 1617 / JCM 11322 / P2) (Sulfolobus solfataricus), this protein is DNA-directed RNA polymerase subunit Rpo2.